Consider the following 516-residue polypeptide: Replication factor C large subunit (516 aa).

44 to 51 (GAPGVGKT) is a binding site for ATP. A disordered region spans residues 421–516 (RSEAVEAHAG…DGQAGLSEFM (96 aa)). Basic and acidic residues predominate over residues 454–467 (VQSHKSAESGDDTV). Residues 479-496 (QSGASETASATESASDSD) are compositionally biased toward low complexity. Residues 497–508 (ASTDTDADDDDG) show a composition bias toward acidic residues.

The protein belongs to the activator 1 small subunits family. RfcL subfamily. In terms of assembly, heteromultimer composed of small subunits (RfcS) and large subunits (RfcL).

Part of the RFC clamp loader complex which loads the PCNA sliding clamp onto DNA. This Haloquadratum walsbyi (strain DSM 16790 / HBSQ001) protein is Replication factor C large subunit.